The following is a 901-amino-acid chain: Envelope glycoprotein B (901 aa).

An N-terminal signal peptide occupies residues 1–34 (MRPVRGIARSRILSCSWRGTWTSALTILYLGVYC). The Virion surface portion of the chain corresponds to 35–736 (ESTTVTPTTV…GALVTFVTNP (702 aa)). Residues N53, N60, and N66 are each glycosylated (N-linked (GlcNAc...) asparagine; by host). Disulfide bonds link C84-C533, C101-C489, C174-C239, and C331-C380. An involved in fusion and/or binding to host membrane region spans residues 141–147 (SYKYVTY). A glycan (N-linked (GlcNAc...) asparagine; by host) is linked at N197. Positions 226–233 (GSVWLYKE) are involved in fusion and/or binding to host membrane. N-linked (GlcNAc...) asparagine; by host glycans are attached at residues N270, N289, N328, N372, N398, N406, N436, N537, N571, and N623. C559 and C596 are oxidised to a cystine. 2 hydrophobic membrane proximal region regions span residues 683-734 (VERV…TFVT) and 714-734 (AVGAVGGAIGSFIGALVTFVT). A helical membrane pass occupies residues 737-757 (FGAFVVFLFCVGCITLVITVY). Residues 758–901 (RRQRRAMQRP…KLNTEDDVHV (144 aa)) lie on the Intravirion side of the membrane. 2 disordered regions span residues 794 to 813 (GPEGTSGDAPPPYPGEAPYG) and 852 to 901 (DDKK…DVHV). Composition is skewed to basic and acidic residues over residues 852–864 (DDKKRQEIEKSSK) and 872–883 (SETRRRPGIMDR). The short motif at 890–893 (YQKL) is the Internalization motif element.

Belongs to the herpesviridae glycoprotein B family. In terms of assembly, homotrimer; disulfide-linked. Binds to heparan sulfate proteoglycans. Interacts with gH/gL heterodimer. A proteolytic cleavage by host furin generates two subunits that remain linked by disulfide bonds.

The protein resides in the virion membrane. It localises to the host cell membrane. The protein localises to the host endosome membrane. It is found in the host Golgi apparatus membrane. Envelope glycoprotein that forms spikes at the surface of virion envelope. Essential for the initial attachment to heparan sulfate moieties of the host cell surface proteoglycans. Involved in fusion of viral and cellular membranes leading to virus entry into the host cell. Following initial binding to its host receptors, membrane fusion is mediated by the fusion machinery composed at least of gB and the heterodimer gH/gL. May be involved in the fusion between the virion envelope and the outer nuclear membrane during virion egress. The sequence is that of Envelope glycoprotein B from Guinea pig cytomegalovirus (strain 22122) (GPCMV).